The primary structure comprises 378 residues: 3-dehydroquinate synthase (378 aa).

NAD(+) contacts are provided by residues 115 to 119 (GVVGD), 139 to 140 (TS), Lys152, and Lys161. Zn(2+) is bound by residues Glu194, His256, and His275.

This sequence belongs to the sugar phosphate cyclases superfamily. Dehydroquinate synthase family. Co(2+) is required as a cofactor. It depends on Zn(2+) as a cofactor. Requires NAD(+) as cofactor.

Its subcellular location is the cytoplasm. It carries out the reaction 7-phospho-2-dehydro-3-deoxy-D-arabino-heptonate = 3-dehydroquinate + phosphate. It functions in the pathway metabolic intermediate biosynthesis; chorismate biosynthesis; chorismate from D-erythrose 4-phosphate and phosphoenolpyruvate: step 2/7. Catalyzes the conversion of 3-deoxy-D-arabino-heptulosonate 7-phosphate (DAHP) to dehydroquinate (DHQ). The chain is 3-dehydroquinate synthase from Brucella canis (strain ATCC 23365 / NCTC 10854 / RM-666).